A 90-amino-acid chain; its full sequence is Small ribosomal subunit protein uS15 (90 aa).

The protein belongs to the universal ribosomal protein uS15 family. Part of the 30S ribosomal subunit. Forms a bridge to the 50S subunit in the 70S ribosome, contacting the 23S rRNA.

Functionally, one of the primary rRNA binding proteins, it binds directly to 16S rRNA where it helps nucleate assembly of the platform of the 30S subunit by binding and bridging several RNA helices of the 16S rRNA. In terms of biological role, forms an intersubunit bridge (bridge B4) with the 23S rRNA of the 50S subunit in the ribosome. This Mycoplasmoides gallisepticum (strain R(low / passage 15 / clone 2)) (Mycoplasma gallisepticum) protein is Small ribosomal subunit protein uS15.